A 192-amino-acid chain; its full sequence is Glycerol-3-phosphate acyltransferase (192 aa).

The next 5 helical transmembrane spans lie at 3 to 23 (ALFL…EVIA), 51 to 71 (YGVL…LIAV), 80 to 100 (VLTF…FFGF), 112 to 132 (VVFA…LGIF), and 149 to 169 (AFLF…AIVI).

The protein belongs to the PlsY family. Probably interacts with PlsX.

The protein resides in the cell inner membrane. It catalyses the reaction an acyl phosphate + sn-glycerol 3-phosphate = a 1-acyl-sn-glycero-3-phosphate + phosphate. The protein operates within lipid metabolism; phospholipid metabolism. In terms of biological role, catalyzes the transfer of an acyl group from acyl-phosphate (acyl-PO(4)) to glycerol-3-phosphate (G3P) to form lysophosphatidic acid (LPA). This enzyme utilizes acyl-phosphate as fatty acyl donor, but not acyl-CoA or acyl-ACP. In Aquifex aeolicus (strain VF5), this protein is Glycerol-3-phosphate acyltransferase.